The sequence spans 152 residues: Transcriptional regulator MraZ (152 aa).

2 consecutive SpoVT-AbrB domains span residues 7–51 (KERH…APDR) and 89–132 (LEMV…DPQR).

This sequence belongs to the MraZ family. In terms of assembly, forms oligomers.

It is found in the cytoplasm. The protein resides in the nucleoid. The chain is Transcriptional regulator MraZ from Pelodictyon phaeoclathratiforme (strain DSM 5477 / BU-1).